We begin with the raw amino-acid sequence, 365 residues long: Zinc finger TRAF-type-containing protein 1-A (365 aa).

Residues 1-56 (MSEEREAPGPLASSSAGLGAEVGQEEVPGGAGPARLLLLPSDSDGPPKKRLRSEAE) are disordered. The RING-type; degenerate zinc finger occupies 72–117 (CTVCLDLPKASVYQCTNGHLMCAGCFIHLLADSRLKEEQATCPNCR). The segment at 113-186 (CPNCRCEISK…PWEGPYHELT (74 aa)) adopts a TRAF-type zinc-finger fold.

This sequence belongs to the ZFTRAF1 family.

The protein resides in the cytoplasm. This Xenopus laevis (African clawed frog) protein is Zinc finger TRAF-type-containing protein 1-A.